A 353-amino-acid chain; its full sequence is Heat-inducible transcription repressor HrcA (353 aa).

The protein belongs to the HrcA family.

In terms of biological role, negative regulator of class I heat shock genes (grpE-dnaK-dnaJ and groELS operons). Prevents heat-shock induction of these operons. This chain is Heat-inducible transcription repressor HrcA, found in Synechococcus elongatus (strain ATCC 33912 / PCC 7942 / FACHB-805) (Anacystis nidulans R2).